Reading from the N-terminus, the 283-residue chain is Protein BASIC PENTACYSTEINE1 (283 aa).

The disordered stretch occupies residues 111–170; the sequence is RFEENPIPPPAPCEEQTGKKRKMRGSIATPTVPKAKKMRKPKEERDVTNNNVQQQQQRVK. Positions 158–169 are enriched in low complexity; that stretch reads TNNNVQQQQQRV.

The protein belongs to the BBR/BPC family. Expressed in seedlings, leaves and pistils. Detected in the base of flowers and tips of carpels, in leaf and sepal vasculature, in young rosette, in the lateral and tip of primary roots, and in the whole ovule.

The protein resides in the nucleus. Its function is as follows. Transcriptional regulator that specifically binds to GA-rich elements (GAGA-repeats) present in regulatory sequences of genes involved in developmental processes. Negatively regulates the homeotic gene AGL11/STK, which controls ovule primordium identity, by a cooperative binding to purine-rich elements present in the regulatory sequence leading to DNA conformational changes. This is Protein BASIC PENTACYSTEINE1 (BPC1) from Arabidopsis thaliana (Mouse-ear cress).